Reading from the N-terminus, the 209-residue chain is Probable GTP-binding protein EngB (209 aa).

The EngB-type G domain occupies 12 to 203; that stretch reads INLEIIFAGR…RDRLHEMKRD (192 aa). GTP contacts are provided by residues 20–27, 45–49, 62–65, 142–145, and 179–181; these read GRSNVGKS, GVTLR, DMPG, NKMD, and ISA. 2 residues coordinate Mg(2+): Ser27 and Thr47.

This sequence belongs to the TRAFAC class TrmE-Era-EngA-EngB-Septin-like GTPase superfamily. EngB GTPase family. It depends on Mg(2+) as a cofactor.

Necessary for normal cell division and for the maintenance of normal septation. This is Probable GTP-binding protein EngB from Methanosarcina mazei (strain ATCC BAA-159 / DSM 3647 / Goe1 / Go1 / JCM 11833 / OCM 88) (Methanosarcina frisia).